A 123-amino-acid chain; its full sequence is MLGPNAQVTVVVAQPGPDHLDHLLLDTQHCQHSSCGSAACTQLTWVPCLGGSHKASIKMSAQAVVSTEAPWERPCFQAHLGCLQNSVLCSCRMEGFSLFLAMLWGGVGELPSDPRGHLQFLAT.

This is an uncharacterized protein from Homo sapiens (Human).